A 478-amino-acid polypeptide reads, in one-letter code: Bifunctional protein HldE (478 aa).

The segment at 1–318 is ribokinase; it reads MKVTLPDFRQ…ENAIRGRADT (318 aa). 195–198 serves as a coordination point for ATP; the sequence is NLSE. The active site involves Asp-264. The tract at residues 344–478 is cytidylyltransferase; that stretch reads MTNGCFDILH…NMIKASTSQS (135 aa).

In the N-terminal section; belongs to the carbohydrate kinase PfkB family. The protein in the C-terminal section; belongs to the cytidylyltransferase family. Homodimer.

It carries out the reaction D-glycero-beta-D-manno-heptose 7-phosphate + ATP = D-glycero-beta-D-manno-heptose 1,7-bisphosphate + ADP + H(+). It catalyses the reaction D-glycero-beta-D-manno-heptose 1-phosphate + ATP + H(+) = ADP-D-glycero-beta-D-manno-heptose + diphosphate. It functions in the pathway nucleotide-sugar biosynthesis; ADP-L-glycero-beta-D-manno-heptose biosynthesis; ADP-L-glycero-beta-D-manno-heptose from D-glycero-beta-D-manno-heptose 7-phosphate: step 1/4. Its pathway is nucleotide-sugar biosynthesis; ADP-L-glycero-beta-D-manno-heptose biosynthesis; ADP-L-glycero-beta-D-manno-heptose from D-glycero-beta-D-manno-heptose 7-phosphate: step 3/4. Its function is as follows. Catalyzes the phosphorylation of D-glycero-D-manno-heptose 7-phosphate at the C-1 position to selectively form D-glycero-beta-D-manno-heptose-1,7-bisphosphate. Catalyzes the ADP transfer from ATP to D-glycero-beta-D-manno-heptose 1-phosphate, yielding ADP-D-glycero-beta-D-manno-heptose. This is Bifunctional protein HldE from Pectobacterium atrosepticum (strain SCRI 1043 / ATCC BAA-672) (Erwinia carotovora subsp. atroseptica).